Consider the following 307-residue polypeptide: N-acetylmuramic acid 6-phosphate etherase (307 aa).

Residues 59–222 enclose the SIS domain; it reads TADRLRQGGR…STGVMVKLGK (164 aa). E87 functions as the Proton donor in the catalytic mechanism. E118 is an active-site residue.

The protein belongs to the GCKR-like family. MurNAc-6-P etherase subfamily. Homodimer.

It catalyses the reaction N-acetyl-D-muramate 6-phosphate + H2O = N-acetyl-D-glucosamine 6-phosphate + (R)-lactate. The protein operates within amino-sugar metabolism; N-acetylmuramate degradation. Its function is as follows. Specifically catalyzes the cleavage of the D-lactyl ether substituent of MurNAc 6-phosphate, producing GlcNAc 6-phosphate and D-lactate. In Trichormus variabilis (strain ATCC 29413 / PCC 7937) (Anabaena variabilis), this protein is N-acetylmuramic acid 6-phosphate etherase.